The following is a 318-amino-acid chain: Phosphatidylglycerol--prolipoprotein diacylglyceryl transferase (318 aa).

Transmembrane regions (helical) follow at residues 24 to 44, 60 to 80, and 115 to 135; these read GPST…YLLP, LLLL…VFEI, and LFSG…LFIT. Position 164 (Arg164) interacts with a 1,2-diacyl-sn-glycero-3-phospho-(1'-sn-glycerol). 2 helical membrane-spanning segments follow: residues 198-218 and 285-305; these read VPVW…FFYF and GFSQ…FFIL.

This sequence belongs to the Lgt family.

Its subcellular location is the cell inner membrane. It carries out the reaction L-cysteinyl-[prolipoprotein] + a 1,2-diacyl-sn-glycero-3-phospho-(1'-sn-glycerol) = an S-1,2-diacyl-sn-glyceryl-L-cysteinyl-[prolipoprotein] + sn-glycerol 1-phosphate + H(+). Its pathway is protein modification; lipoprotein biosynthesis (diacylglyceryl transfer). Its function is as follows. Catalyzes the transfer of the diacylglyceryl group from phosphatidylglycerol to the sulfhydryl group of the N-terminal cysteine of a prolipoprotein, the first step in the formation of mature lipoproteins. The chain is Phosphatidylglycerol--prolipoprotein diacylglyceryl transferase from Leptospira interrogans serogroup Icterohaemorrhagiae serovar copenhageni (strain Fiocruz L1-130).